Here is a 250-residue protein sequence, read N- to C-terminus: 2,3-bisphosphoglycerate-dependent phosphoglycerate mutase (250 aa).

Substrate contacts are provided by residues 8-15, 21-22, arginine 60, 87-90, lysine 98, 114-115, and 183-184; these read RHGESEWN, TG, ERHY, RR, and GN. The Tele-phosphohistidine intermediate role is filled by histidine 9. Catalysis depends on glutamate 87, which acts as the Proton donor/acceptor.

Belongs to the phosphoglycerate mutase family. BPG-dependent PGAM subfamily.

The enzyme catalyses (2R)-2-phosphoglycerate = (2R)-3-phosphoglycerate. It participates in carbohydrate degradation; glycolysis; pyruvate from D-glyceraldehyde 3-phosphate: step 3/5. Functionally, catalyzes the interconversion of 2-phosphoglycerate and 3-phosphoglycerate. This is 2,3-bisphosphoglycerate-dependent phosphoglycerate mutase from Borrelia duttonii (strain Ly).